Here is a 244-residue protein sequence, read N- to C-terminus: Ribonuclease PH (244 aa).

Phosphate is bound by residues Arg-86 and Gly-124 to Arg-126.

Belongs to the RNase PH family. In terms of assembly, homohexameric ring arranged as a trimer of dimers.

The enzyme catalyses tRNA(n+1) + phosphate = tRNA(n) + a ribonucleoside 5'-diphosphate. Phosphorolytic 3'-5' exoribonuclease that plays an important role in tRNA 3'-end maturation. Removes nucleotide residues following the 3'-CCA terminus of tRNAs; can also add nucleotides to the ends of RNA molecules by using nucleoside diphosphates as substrates, but this may not be physiologically important. Probably plays a role in initiation of 16S rRNA degradation (leading to ribosome degradation) during starvation. The protein is Ribonuclease PH of Oceanobacillus iheyensis (strain DSM 14371 / CIP 107618 / JCM 11309 / KCTC 3954 / HTE831).